The primary structure comprises 370 residues: Aminomethyltransferase (370 aa).

The protein belongs to the GcvT family. As to quaternary structure, the glycine cleavage system is composed of four proteins: P, T, L and H.

The enzyme catalyses N(6)-[(R)-S(8)-aminomethyldihydrolipoyl]-L-lysyl-[protein] + (6S)-5,6,7,8-tetrahydrofolate = N(6)-[(R)-dihydrolipoyl]-L-lysyl-[protein] + (6R)-5,10-methylene-5,6,7,8-tetrahydrofolate + NH4(+). Functionally, the glycine cleavage system catalyzes the degradation of glycine. The sequence is that of Aminomethyltransferase from Stenotrophomonas maltophilia (strain R551-3).